Consider the following 345-residue polypeptide: GTPase Obg (345 aa).

Residues 1 to 159 (MRFIDEASIT…FHLKLELKLL (159 aa)) form the Obg domain. An OBG-type G domain is found at 160–329 (ADVGIVGLPN…LIQILARQIA (170 aa)). Residues 166–173 (GLPNAGKS), 191–195 (FTTLT), 213–216 (DIPG), 283–286 (NKID), and 310–312 (SAA) each bind GTP. The Mg(2+) site is built by S173 and T193.

Belongs to the TRAFAC class OBG-HflX-like GTPase superfamily. OBG GTPase family. As to quaternary structure, monomer. It depends on Mg(2+) as a cofactor.

The protein localises to the cytoplasm. An essential GTPase which binds GTP, GDP and possibly (p)ppGpp with moderate affinity, with high nucleotide exchange rates and a fairly low GTP hydrolysis rate. Plays a role in control of the cell cycle, stress response, ribosome biogenesis and in those bacteria that undergo differentiation, in morphogenesis control. This is GTPase Obg from Desulforapulum autotrophicum (strain ATCC 43914 / DSM 3382 / VKM B-1955 / HRM2) (Desulfobacterium autotrophicum).